The chain runs to 695 residues: NADPH--cytochrome P450 reductase (695 aa).

Over 1 to 8 (MAQLDTLD) the chain is Lumenal. Residues 9-31 (IVVLVVLLVGSVAYFTKGSYWAV) traverse the membrane as a helical segment. The Cytoplasmic portion of the chain corresponds to 32-695 (PKDPYAAANS…SGSYQEDVWS (664 aa)). Residues 66–221 (CVIFYGSQTG…DFLAWKEPMW (156 aa)) enclose the Flavodoxin-like domain. FMN-binding positions include 72 to 77 (SQTGTA), 123 to 126 (ATYG), 169 to 178 (LGNNTYEHYN), and D204. An FAD-binding FR-type domain is found at 277 to 538 (HNPYIAPIVE…HVRHSNFKLP (262 aa)). Residue R296 participates in NADP(+) binding. Residues 451 to 454 (RYYS), 469 to 471 (TAV), and 486 to 489 (GVTT) contribute to the FAD site. NADP(+) contacts are provided by residues T552, 614–615 (SR), 620–624 (KVYVQ), and E656. FAD is bound at residue W694.

This sequence belongs to the NADPH--cytochrome P450 reductase family. In the N-terminal section; belongs to the flavodoxin family. It in the C-terminal section; belongs to the flavoprotein pyridine nucleotide cytochrome reductase family. The cofactor is FAD. FMN serves as cofactor.

It is found in the endoplasmic reticulum membrane. The protein localises to the mitochondrion outer membrane. The protein resides in the cell membrane. It catalyses the reaction 2 oxidized [cytochrome P450] + NADPH = 2 reduced [cytochrome P450] + NADP(+) + H(+). This enzyme is required for electron transfer from NADP to cytochrome P450 in microsomes. It can also provide electron transfer to heme oxygenase and cytochrome B5. Involved in ergosterol biosynthesis. The protein is NADPH--cytochrome P450 reductase of Aspergillus fumigatus (strain ATCC MYA-4609 / CBS 101355 / FGSC A1100 / Af293) (Neosartorya fumigata).